The primary structure comprises 507 residues: Maturase K (507 aa).

This sequence belongs to the intron maturase 2 family. MatK subfamily.

The protein resides in the plastid. Its subcellular location is the chloroplast. Functionally, usually encoded in the trnK tRNA gene intron. Probably assists in splicing its own and other chloroplast group II introns. This Umbellularia californica (California bay laurel) protein is Maturase K.